Here is an 816-residue protein sequence, read N- to C-terminus: MAITDFFAGEIATELLKQLFTISTTAWRYKNTAKQLLTLIDSIRPTIKEIQYSGVELPAHRQAQIGMLFDTLEKGKKLTDKVLSSKRWNLYRQLTLARKMEKLEKTISNFLKNEVFTHILADVHHLRADTSVRLDRVDMSLDRVIQQVGSMKIGGGGLISEAMKRAEAMEIETNDDSEKFGVGLELGKVKVKKMMFESQGGVFGISGMGGVGKTTLAKELQRDHEVQCHFENRILFLTVSQSPLLEELRELIWGFLSGCEAGNPVPDCNFPFDGARKLVILDDVWTTQALDRLTSFKFPGCTTLVVSRSKLTEPKFTYDVEVLSEDEAISLFCLCAFGQKSIPLGFCKDLVKQVANECKGLPLALKVTGASLNGKPEMYWKGVLQRLSKGEPADDSHESRLLRQMEASLDNLDQTTKDCFLDLGAFPEDRKIPLDVLINIWIELHDIDEGNAFAILVDLSHKNLLTLGKDPRLGSLYASHYDIFVTQHDVLRDLALHLSNAGKVNRRKRLLMPKRELDLPGDWERNNDEHYIAQIVSIHTGEMNEMQWFDMEFPKAEILILNFSSDKYVLPPFISKMSRLKVLVIINNGMSPAVLHDFSIFAHLSKLRSLWLERVHVPQLSNSTTPLKNLHKMSLILCKINKSFDQTGLDVADIFPKLGDLTIDHCDDLVALPSSICGLTSLSCLSITNCPRLGELPKNLSKLQALEILRLYACPELKTLPGEICELPGLKYLDISQCVSLSCLPEEIGKLKKLEKIDMRECCFSDRPSSAVSLKSLRHVICDTDVAFMWEEVEKAVPGLKIEAAEKCFSLDWLDE.

Residues 1–149 (MAITDFFAGE…SLDRVIQQVG (149 aa)) enclose the RPW8 domain. Residues 95 to 111 (TLARKMEKLEKTISNFL) are a coiled coil. The region spanning 191-443 (VKKMMFESQG…LDVLINIWIE (253 aa)) is the NB-ARC domain. 207–214 (GMGGVGKT) is a binding site for ATP. The stretch at 399-415 (SRLLRQMEASLDNLDQT) forms a coiled coil. LRR repeat units lie at residues 681–704 (SLSC…SKLQ), 705–727 (ALEI…ICEL), 729–751 (GLKY…IGKL), and 753–774 (KLEK…AVSL).

This sequence belongs to the disease resistance NB-LRR family.

Probable disease resistance protein. This is Probable disease resistance protein At4g33300 from Arabidopsis thaliana (Mouse-ear cress).